The sequence spans 134 residues: ATP synthase epsilon chain (134 aa).

It belongs to the ATPase epsilon chain family. As to quaternary structure, F-type ATPases have 2 components, CF(1) - the catalytic core - and CF(0) - the membrane proton channel. CF(1) has five subunits: alpha(3), beta(3), gamma(1), delta(1), epsilon(1). CF(0) has three main subunits: a, b and c.

It localises to the cell membrane. Functionally, produces ATP from ADP in the presence of a proton gradient across the membrane. In Priestia megaterium (strain ATCC 12872 / QMB1551) (Bacillus megaterium), this protein is ATP synthase epsilon chain (atpC).